A 177-amino-acid chain; its full sequence is Transcription factor E (177 aa).

The 83-residue stretch at 9-91 (VEELLNELVG…YWRINYDKAL (83 aa)) folds into the HTH TFE/IIEalpha-type domain.

This sequence belongs to the TFE family. Monomer. Interaction with RNA polymerase subunits RpoF and RpoE is necessary for Tfe stimulatory transcription activity. Able to interact with Tbp and RNA polymerase in the absence of DNA promoter. Interacts both with the preinitiation and elongation complexes.

Transcription factor that plays a role in the activation of archaeal genes transcribed by RNA polymerase. Facilitates transcription initiation by enhancing TATA-box recognition by TATA-box-binding protein (Tbp), and transcription factor B (Tfb) and RNA polymerase recruitment. Not absolutely required for transcription in vitro, but particularly important in cases where Tbp or Tfb function is not optimal. It dynamically alters the nucleic acid-binding properties of RNA polymerases by stabilizing the initiation complex and destabilizing elongation complexes. Seems to translocate with the RNA polymerase following initiation and acts by binding to the non template strand of the transcription bubble in elongation complexes. The sequence is that of Transcription factor E from Archaeoglobus fulgidus (strain ATCC 49558 / DSM 4304 / JCM 9628 / NBRC 100126 / VC-16).